The primary structure comprises 202 residues: uncharacterized protein (202 aa).

A disordered region spans residues 178–202 (VCSSEDSEADRYSDYGWGGPSSPFN).

This is an uncharacterized protein from Homo sapiens (Human).